A 135-amino-acid chain; its full sequence is NADH-quinone oxidoreductase subunit K (135 aa).

The next 3 helical transmembrane spans lie at 33–53 (VLGL…FAIG), 63–83 (FLFM…AFVV), and 95–115 (IMFI…LAIL).

It belongs to the complex I subunit 4L family. As to quaternary structure, NDH-1 is composed of 14 different subunits. Subunits NuoA, H, J, K, L, M, N constitute the membrane sector of the complex.

The protein localises to the cell inner membrane. It catalyses the reaction a quinone + NADH + 5 H(+)(in) = a quinol + NAD(+) + 4 H(+)(out). NDH-1 shuttles electrons from NADH, via FMN and iron-sulfur (Fe-S) centers, to quinones in the respiratory chain. The immediate electron acceptor for the enzyme in this species is believed to be ubiquinone. Couples the redox reaction to proton translocation (for every two electrons transferred, four hydrogen ions are translocated across the cytoplasmic membrane), and thus conserves the redox energy in a proton gradient. The polypeptide is NADH-quinone oxidoreductase subunit K (Psychrobacter arcticus (strain DSM 17307 / VKM B-2377 / 273-4)).